Reading from the N-terminus, the 413-residue chain is Argininosuccinate synthase (413 aa).

ATP-binding positions include 12-20 (AYSGGLDTS) and Ala-39. L-citrulline-binding residues include Tyr-92 and Ser-97. Residue Gly-122 coordinates ATP. L-aspartate contacts are provided by Thr-124, Asn-128, and Asp-129. L-citrulline is bound at residue Asn-128. L-citrulline-binding residues include Arg-132, Ser-189, Ser-198, Glu-274, and Tyr-286.

The protein belongs to the argininosuccinate synthase family. Type 1 subfamily. As to quaternary structure, homotetramer.

It localises to the cytoplasm. It catalyses the reaction L-citrulline + L-aspartate + ATP = 2-(N(omega)-L-arginino)succinate + AMP + diphosphate + H(+). It participates in amino-acid biosynthesis; L-arginine biosynthesis; L-arginine from L-ornithine and carbamoyl phosphate: step 2/3. The protein is Argininosuccinate synthase of Aliarcobacter butzleri (strain RM4018) (Arcobacter butzleri).